A 526-amino-acid polypeptide reads, in one-letter code: Bifunctional purine biosynthesis protein PurH (526 aa).

Residues M1–T147 form the MGS-like domain.

This sequence belongs to the PurH family.

It catalyses the reaction (6R)-10-formyltetrahydrofolate + 5-amino-1-(5-phospho-beta-D-ribosyl)imidazole-4-carboxamide = 5-formamido-1-(5-phospho-D-ribosyl)imidazole-4-carboxamide + (6S)-5,6,7,8-tetrahydrofolate. The catalysed reaction is IMP + H2O = 5-formamido-1-(5-phospho-D-ribosyl)imidazole-4-carboxamide. It functions in the pathway purine metabolism; IMP biosynthesis via de novo pathway; 5-formamido-1-(5-phospho-D-ribosyl)imidazole-4-carboxamide from 5-amino-1-(5-phospho-D-ribosyl)imidazole-4-carboxamide (10-formyl THF route): step 1/1. It participates in purine metabolism; IMP biosynthesis via de novo pathway; IMP from 5-formamido-1-(5-phospho-D-ribosyl)imidazole-4-carboxamide: step 1/1. This chain is Bifunctional purine biosynthesis protein PurH, found in Neisseria gonorrhoeae (strain ATCC 700825 / FA 1090).